Here is a 456-residue protein sequence, read N- to C-terminus: Probable multidrug resistance protein NorM (456 aa).

12 helical membrane passes run 13–34 (QFLT…MTFF), 54–76 (SSFW…PIIA), 95–117 (LYIA…PMIL), 132–154 (HFLN…RSFI), 161–183 (RVTM…CFIF), 193–215 (GAGS…VILI), 244–266 (IGVP…TILM), 286–308 (LLYA…ETGA), 321–343 (GMAA…RDII), 358–380 (MHFL…VLGA), 387–409 (VTVT…GYGL), and 414–436 (LGPF…ILSI).

It belongs to the multi antimicrobial extrusion (MATE) (TC 2.A.66.1) family.

The protein localises to the cell membrane. Multidrug efflux pump. The protein is Probable multidrug resistance protein NorM (norM) of Listeria monocytogenes serovar 1/2a (strain ATCC BAA-679 / EGD-e).